We begin with the raw amino-acid sequence, 162 residues long: V-type proton ATPase subunit c' (162 aa).

At 1 to 11 the chain is on the lumenal side; it reads MSSNLCPIYSS. A helical membrane pass occupies residues 12–32; it reads FFGFAGVCASMVFSCLGAGYG. At 33–54 the chain is on the cytoplasmic side; it reads TALAGRGIAAVGAFRPEIVMKS. The chain crosses the membrane as a helical span at residues 55–75; that stretch reads LIPVVMSGIIGVYGLVMSVLI. At 76-93 the chain is on the lumenal side; that stretch reads AGDMSPDNDYSLFSGFIH. The helical transmembrane segment at 94-114 threads the bilayer; it reads LSAGLAVGLTGVAAGYAIGVV. The Cytoplasmic portion of the chain corresponds to 115 to 132; it reads GDRGVQSFMRQDRIFVSM. A helical transmembrane segment spans residues 133 to 153; that stretch reads VLILIFAEVLGLYGLIVGLIL. Topologically, residues 154 to 162 are lumenal; it reads QTKTSNVCY.

Belongs to the V-ATPase proteolipid subunit family. As to quaternary structure, V-ATPase is a heteromultimeric enzyme composed of a peripheral catalytic V1 complex (components A to H) attached to an integral membrane V0 proton pore complex (components: a, c, c', c'', d, e, f and VOA1). The decameric c-ring forms the proton-conducting pore, and is composed of eight proteolipid subunits c, one subunit c' and one subunit c''.

It localises to the vacuole membrane. In terms of biological role, proton-conducting pore forming subunit of the V0 complex of vacuolar(H+)-ATPase (V-ATPase), a multisubunit enzyme composed of a peripheral complex (V1) that hydrolyzes ATP and a membrane integral complex (V0) that translocates protons. V-ATPase is responsible for acidifying and maintaining the pH of intracellular compartments. This is V-type proton ATPase subunit c' from Schizosaccharomyces pombe (strain 972 / ATCC 24843) (Fission yeast).